We begin with the raw amino-acid sequence, 150 residues long: Large ribosomal subunit protein bL9 (150 aa).

It belongs to the bacterial ribosomal protein bL9 family.

Its function is as follows. Binds to the 23S rRNA. This chain is Large ribosomal subunit protein bL9, found in Delftia acidovorans (strain DSM 14801 / SPH-1).